The following is a 185-amino-acid chain: GTP cyclohydrolase 1 (185 aa).

Zn(2+) contacts are provided by C75, H78, and C146.

This sequence belongs to the GTP cyclohydrolase I family. In terms of assembly, toroid-shaped homodecamer, composed of two pentamers of five dimers.

The catalysed reaction is GTP + H2O = 7,8-dihydroneopterin 3'-triphosphate + formate + H(+). It functions in the pathway cofactor biosynthesis; 7,8-dihydroneopterin triphosphate biosynthesis; 7,8-dihydroneopterin triphosphate from GTP: step 1/1. This Alkalilimnicola ehrlichii (strain ATCC BAA-1101 / DSM 17681 / MLHE-1) protein is GTP cyclohydrolase 1.